Reading from the N-terminus, the 469-residue chain is Glutamate--tRNA ligase (469 aa).

Residues 9–19 carry the 'HIGH' region motif; the sequence is PSPTGFLHVGG. 4 residues coordinate Zn(2+): C98, C100, C125, and D127. The 'KMSKS' region signature appears at 236–240; it reads KLSKR. K239 provides a ligand contact to ATP.

Belongs to the class-I aminoacyl-tRNA synthetase family. Glutamate--tRNA ligase type 1 subfamily. Monomer. Zn(2+) is required as a cofactor.

It is found in the cytoplasm. It catalyses the reaction tRNA(Glu) + L-glutamate + ATP = L-glutamyl-tRNA(Glu) + AMP + diphosphate. In terms of biological role, catalyzes the attachment of glutamate to tRNA(Glu) in a two-step reaction: glutamate is first activated by ATP to form Glu-AMP and then transferred to the acceptor end of tRNA(Glu). The protein is Glutamate--tRNA ligase of Shewanella baltica (strain OS155 / ATCC BAA-1091).